The chain runs to 64 residues: Large ribosomal subunit protein bL33c (64 aa).

It belongs to the bacterial ribosomal protein bL33 family.

Its subcellular location is the plastid. The protein localises to the chloroplast. In Cyanidium caldarium (Red alga), this protein is Large ribosomal subunit protein bL33c (rpl33).